The following is a 183-amino-acid chain: MNTYVRPALSLILLLAVVTGALYPLAVTGVAQVVFPEQANGSLVRDEQGQVRGSALIAQDFQGDGWFHSRPSAGAYATVASSASNLSPSNPALAERVAGDAAKLYQAGQGPVPQALLTTSGSGLDPHLPPQAVAYQIPRVAAARQIPVERLQALLEGATLHPLIGPPVVNVLALNQALSKFGL.

A helical transmembrane segment spans residues 11–31; the sequence is LILLLAVVTGALYPLAVTGVA.

Belongs to the KdpC family. As to quaternary structure, the system is composed of three essential subunits: KdpA, KdpB and KdpC.

The protein resides in the cell inner membrane. Part of the high-affinity ATP-driven potassium transport (or Kdp) system, which catalyzes the hydrolysis of ATP coupled with the electrogenic transport of potassium into the cytoplasm. This subunit acts as a catalytic chaperone that increases the ATP-binding affinity of the ATP-hydrolyzing subunit KdpB by the formation of a transient KdpB/KdpC/ATP ternary complex. In Pseudomonas putida (strain W619), this protein is Potassium-transporting ATPase KdpC subunit.